The sequence spans 390 residues: Pyruvate dehydrogenase E1 component subunit alpha, somatic form, mitochondrial (390 aa).

Residues 1–29 constitute a mitochondrion transit peptide; sequence MRKMLAAVSRVLSGASQKPASRVLVASRN. Lysine 63 is modified (N6-acetyllysine; alternate). Position 63 is an N6-succinyllysine; alternate (lysine 63). Positions 92, 118, 119, 157, 165, 167, 196, 197, 198, 225, and 227 each coordinate pyruvate. Thiamine diphosphate-binding residues include tyrosine 118 and arginine 119. Positions 165, 167, 196, 197, 198, and 225 each coordinate thiamine diphosphate. Residue aspartate 196 participates in Mg(2+) binding. Positions 225 and 227 each coordinate Mg(2+). Serine 232 is subject to Phosphoserine; by PDK1. At lysine 244 the chain carries N6-acetyllysine; alternate. N6-succinyllysine; alternate is present on lysine 244. Lysine 277 carries the post-translational modification N6-succinyllysine. Residue histidine 292 participates in thiamine diphosphate binding. Serine 293 bears the Phosphoserine; by PDK1, PDK2, PDK3 and PDK4 mark. Phosphoserine is present on serine 295. The residue at position 300 (serine 300) is a Phosphoserine; by PDK1, PDK2, PDK3 and PDK4. A Phosphotyrosine modification is found at tyrosine 301. Position 313 is an N6-acetyllysine; alternate (lysine 313). Lysine 313 is modified (N6-succinyllysine; alternate). 2 positions are modified to N6-acetyllysine: lysine 321 and lysine 336. Lysine 385 bears the N6-succinyllysine mark.

Heterotetramer of two PDHA1 and two PDHB subunits. The heterotetramer interacts with DLAT, and is part of the multimeric pyruvate dehydrogenase complex that contains multiple copies of pyruvate dehydrogenase (E1), dihydrolipoamide acetyltransferase (DLAT, E2) and lipoamide dehydrogenase (DLD, E3). These subunits are bound to an inner core composed of about 48 DLAT and 12 PDHX molecules. Requires thiamine diphosphate as cofactor. Mg(2+) is required as a cofactor. Phosphorylation at Ser-232, Ser-293 and Ser-300 by PDK family kinases inactivates the enzyme; for this phosphorylation at a single site is sufficient. Phosphorylation at Ser-293 interferes with access to active site, and thereby inactivates the enzyme. Dephosphorylation at all three sites, i.e. at Ser-232, Ser-293 and Ser-300, is required for reactivation. Post-translationally, acetylation alters the phosphorylation pattern. Deacetylated by SIRT3.

The protein localises to the mitochondrion matrix. It catalyses the reaction N(6)-[(R)-lipoyl]-L-lysyl-[protein] + pyruvate + H(+) = N(6)-[(R)-S(8)-acetyldihydrolipoyl]-L-lysyl-[protein] + CO2. Pyruvate dehydrogenase activity is inhibited by phosphorylation of PDHA1; it is reactivated by dephosphorylation. Functionally, the pyruvate dehydrogenase complex catalyzes the overall conversion of pyruvate to acetyl-CoA and CO(2), and thereby links the glycolytic pathway to the tricarboxylic cycle. The chain is Pyruvate dehydrogenase E1 component subunit alpha, somatic form, mitochondrial (PDHA1) from Macaca fascicularis (Crab-eating macaque).